Reading from the N-terminus, the 289-residue chain is Homoserine kinase (289 aa).

79 to 89 provides a ligand contact to ATP; sequence PLARGLGSSSS.

This sequence belongs to the GHMP kinase family. Homoserine kinase subfamily.

The protein resides in the cytoplasm. The catalysed reaction is L-homoserine + ATP = O-phospho-L-homoserine + ADP + H(+). Its pathway is amino-acid biosynthesis; L-threonine biosynthesis; L-threonine from L-aspartate: step 4/5. Its function is as follows. Catalyzes the ATP-dependent phosphorylation of L-homoserine to L-homoserine phosphate. In Streptococcus pneumoniae serotype 2 (strain D39 / NCTC 7466), this protein is Homoserine kinase.